A 78-amino-acid chain; its full sequence is Large ribosomal subunit protein bL31 (78 aa).

Belongs to the bacterial ribosomal protein bL31 family. Type A subfamily. As to quaternary structure, part of the 50S ribosomal subunit.

Functionally, binds the 23S rRNA. This is Large ribosomal subunit protein bL31 (rpmE) from Rickettsia felis (strain ATCC VR-1525 / URRWXCal2) (Rickettsia azadi).